Here is a 187-residue protein sequence, read N- to C-terminus: NADH-quinone oxidoreductase subunit B (187 aa).

The [4Fe-4S] cluster site is built by Cys-66, Cys-67, Cys-131, and Cys-161.

This sequence belongs to the complex I 20 kDa subunit family. In terms of assembly, NDH-1 is composed of 14 different subunits. Subunits NuoB, C, D, E, F, and G constitute the peripheral sector of the complex. [4Fe-4S] cluster is required as a cofactor.

It is found in the cell inner membrane. It carries out the reaction a quinone + NADH + 5 H(+)(in) = a quinol + NAD(+) + 4 H(+)(out). In terms of biological role, NDH-1 shuttles electrons from NADH, via FMN and iron-sulfur (Fe-S) centers, to quinones in the respiratory chain. Couples the redox reaction to proton translocation (for every two electrons transferred, four hydrogen ions are translocated across the cytoplasmic membrane), and thus conserves the redox energy in a proton gradient. This is NADH-quinone oxidoreductase subunit B from Rhizorhabdus wittichii (strain DSM 6014 / CCUG 31198 / JCM 15750 / NBRC 105917 / EY 4224 / RW1) (Sphingomonas wittichii).